The primary structure comprises 151 residues: Putative UPF0320 protein YFL063W (151 aa).

This sequence belongs to the UPF0320 family.

This chain is Putative UPF0320 protein YFL063W, found in Saccharomyces cerevisiae (strain ATCC 204508 / S288c) (Baker's yeast).